Consider the following 56-residue polypeptide: Putative zinc-binding protein YnfU (56 aa).

Residues Cys19, Cys22, Cys41, and Cys44 each contribute to the Zn(2+) site.

It depends on Zn(2+) as a cofactor.

This chain is Putative zinc-binding protein YnfU, found in Escherichia coli (strain K12).